The sequence spans 256 residues: tRNA pseudouridine synthase A (256 aa).

Aspartate 52 acts as the Nucleophile in catalysis. Tyrosine 110 contributes to the substrate binding site.

Belongs to the tRNA pseudouridine synthase TruA family. As to quaternary structure, homodimer.

It carries out the reaction uridine(38/39/40) in tRNA = pseudouridine(38/39/40) in tRNA. In terms of biological role, formation of pseudouridine at positions 38, 39 and 40 in the anticodon stem and loop of transfer RNAs. The protein is tRNA pseudouridine synthase A of Stenotrophomonas maltophilia (strain K279a).